A 270-amino-acid chain; its full sequence is Type II restriction enzyme CeqI (270 aa).

It catalyses the reaction Endonucleolytic cleavage of DNA to give specific double-stranded fragments with terminal 5'-phosphates.. In terms of biological role, a P subtype restriction enzyme that recognizes the double-stranded sequence 5'-GATATC-3' and cleaves after T-3. The chain is Type II restriction enzyme CeqI (ceqIR) from Rhodococcus hoagii (Corynebacterium equii).